We begin with the raw amino-acid sequence, 31 residues long: Photosystem II reaction center protein T (31 aa).

A helical membrane pass occupies residues 3-23 (ALVYTFLLVGTLGIIFFAIFF).

The protein belongs to the PsbT family. PSII is composed of 1 copy each of membrane proteins PsbA, PsbB, PsbC, PsbD, PsbE, PsbF, PsbH, PsbI, PsbJ, PsbK, PsbL, PsbM, PsbT, PsbY, PsbZ, Psb30/Ycf12, at least 3 peripheral proteins of the oxygen-evolving complex and a large number of cofactors. It forms dimeric complexes.

The protein localises to the plastid. Its subcellular location is the chloroplast thylakoid membrane. In terms of biological role, found at the monomer-monomer interface of the photosystem II (PS II) dimer, plays a role in assembly and dimerization of PSII. PSII is a light-driven water plastoquinone oxidoreductase, using light energy to abstract electrons from H(2)O, generating a proton gradient subsequently used for ATP formation. This chain is Photosystem II reaction center protein T, found in Chlorella vulgaris (Green alga).